The sequence spans 152 residues: Ninjurin-1 (152 aa).

N-acetylmethionine is present on M1. Acidic residues predominate over residues 1 to 10 (MDPGTEEYEL). The interval 1–30 (MDPGTEEYELNGDLRPGSPGSPDASPPRWG) is disordered. Topologically, residues 1–78 (MDPGTEEYEL…EQGNEFAFFV (78 aa)) are extracellular. Residues 16-27 (PGSPGSPDASPP) are compositionally biased toward low complexity. Phosphoserine occurs at positions 18, 21, and 25. Residues 26–37 (PPRWGLRNRPIN) are N-terminal adhesion motif. The required to induce plasma membrane rupture stretch occupies residues 40 to 69 (HYANKKSAAESMLDIALLMANASQLKAVVE). Residues 44–55 (KKSAAESMLDIA) are helix alpha1. A helix alpha2 region spans residues 58–74 (MANASQLKAVVEQGNEF). Residue N60 is glycosylated (N-linked (GlcNAc...) asparagine). The chain crosses the membrane as a helical span at residues 79-103 (PLVVLISISLVLQIGVGVLLIFLVK). At 104-113 (YDLNNPAKHA) the chain is on the cytoplasmic side. A helical transmembrane segment spans residues 114-138 (KLDFLNNLATGLVFIIVVVNIFITA). The Extracellular portion of the chain corresponds to 139–152 (FGVQKPVMDVAPRQ).

It belongs to the ninjurin family. In terms of assembly, homodimer; in absence of death stimuli, forms an inactive homodimer. Homooligomer; in response to death stimuli, homooligomerizes into long, highly branched filaments and large, ring-shaped structures in the membrane. The topology shown in the entry corresponds to the activated form. Cleaved by MMP9 protease to generate the Secreted ninjurin-1 form. Post-translationally, N-linked glycosylation is required for homooligomerization.

It is found in the cell membrane. The protein localises to the synaptic cell membrane. It localises to the secreted. With respect to regulation, in response to death stimuli, homooligomerizes and disrupts membrane integrity by introducing the hydrophilic faces of alpha1 and alpha2 helices into the hydrophobic membrane. Homooligomerization and ability to mediate plasma membrane rupture is inhibited by glycine; it is unclear whether glycine directly or indirectly inhibits homooligomerization. In normal conditions, NINJ1 is autoinhibited via formation of a homodimer: in the inactive homodimer, the alpha1 and alpha2 helices (residues 44-74) form a single transmembrane region without a kink, in which hydrophilic faces of alpha1 and alpha2 helices are sequestered. Effector of various programmed cell death, such as pyroptosis and necroptosis, which mediates plasma membrane rupture (cytolysis). Oligomerizes in response to death stimuli and forms ring-like structures on the plasma membrane: acts by cutting and shedding membrane disks, like a cookie cutter, leading to membrane damage and loss that cannot be repaired by the cell. Plasma membrane rupture leads to release intracellular molecules named damage-associated molecular patterns (DAMPs) that propagate the inflammatory response. Mechanistically, mediates plasma membrane rupture by introducing hydrophilic faces of 2 alpha helices into the hydrophobic membrane. Induces plasma membrane rupture downstream of Gasdermin (GSDMA, GSDMB, GSDMC, GSDMD, or GSDME) or MLKL during pyroptosis or necroptosis, respectively. Acts as an effector of PANoptosis downstream of CASP1, CASP4, CASP8 and RIPK3. Also induces plasma membrane rupture in response to cell swelling caused by osmotic stress and ferroptosis downstream of lipid peroxidation. Acts as a regulator of Toll-like receptor 4 (TLR4) signaling triggered by lipopolysaccharide (LPS) during systemic inflammation; directly binds LPS. Involved in leukocyte migration during inflammation by promoting transendothelial migration of macrophages via homotypic binding. Promotes the migration of monocytes across the brain endothelium to central nervous system inflammatory lesions. Also acts as a homophilic transmembrane adhesion molecule involved in various processes such as axonal growth, cell chemotaxis and angiogenesis. Promotes cell adhesion by mediating homophilic interactions via its extracellular N-terminal adhesion motif (N-NAM). Involved in the progression of the inflammatory stress by promoting cell-to-cell interactions between immune cells and endothelial cells. Plays a role in nerve regeneration by promoting maturation of Schwann cells. Acts as a regulator of angiogenesis. Promotes the formation of new vessels by mediating the interaction between capillary pericyte cells and endothelial cells. Promotes osteoclasts development by enhancing the survival of prefusion osteoclasts. Also involved in striated muscle growth and differentiation. Its function is as follows. Secreted form generated by cleavage, which has chemotactic activity. Acts as an anti-inflammatory mediator by promoting monocyte recruitment, thereby ameliorating atherosclerosis. The chain is Ninjurin-1 from Rattus norvegicus (Rat).